Consider the following 478-residue polypeptide: SPbeta prophage-derived uncharacterized protein YonD (478 aa).

Residues 326 to 419 (IQSQLNQKDE…KFSTEEVQNL (94 aa)) are a coiled coil.

In Bacillus subtilis (strain 168), this protein is SPbeta prophage-derived uncharacterized protein YonD (yonD).